The following is a 154-amino-acid chain: Large ribosomal subunit protein bL9c (154 aa).

Belongs to the bacterial ribosomal protein bL9 family.

The protein resides in the plastid. Its subcellular location is the chloroplast. In terms of biological role, binds to the 23S rRNA. The polypeptide is Large ribosomal subunit protein bL9c (Gracilaria tenuistipitata var. liui (Red alga)).